The sequence spans 198 residues: Recombination protein RecR (198 aa).

The C4-type zinc finger occupies 57 to 72 (CSVCHNITDTDPCRIC). In terms of domain architecture, Toprim spans 80 to 175 (SVICVVQDAK…KVTRIAHGLP (96 aa)).

Belongs to the RecR family.

May play a role in DNA repair. It seems to be involved in an RecBC-independent recombinational process of DNA repair. It may act with RecF and RecO. The polypeptide is Recombination protein RecR (Halalkalibacterium halodurans (strain ATCC BAA-125 / DSM 18197 / FERM 7344 / JCM 9153 / C-125) (Bacillus halodurans)).